The chain runs to 318 residues: 2-desacetyl-2-hydroxyethyl bacteriochlorophyllide A dehydrogenase (318 aa).

Its pathway is porphyrin-containing compound metabolism; bacteriochlorophyll biosynthesis (light-independent). This protein catalyzes the penultimate step in bacteriochlorophyll a biosynthesis. The protein is 2-desacetyl-2-hydroxyethyl bacteriochlorophyllide A dehydrogenase (bchC) of Cereibacter sphaeroides (strain ATCC 17023 / DSM 158 / JCM 6121 / CCUG 31486 / LMG 2827 / NBRC 12203 / NCIMB 8253 / ATH 2.4.1.) (Rhodobacter sphaeroides).